The following is a 214-amino-acid chain: Probable transaldolase (214 aa).

Lysine 83 (schiff-base intermediate with substrate) is an active-site residue.

The protein belongs to the transaldolase family. Type 3B subfamily.

Its subcellular location is the cytoplasm. It carries out the reaction D-sedoheptulose 7-phosphate + D-glyceraldehyde 3-phosphate = D-erythrose 4-phosphate + beta-D-fructose 6-phosphate. It participates in carbohydrate degradation; pentose phosphate pathway; D-glyceraldehyde 3-phosphate and beta-D-fructose 6-phosphate from D-ribose 5-phosphate and D-xylulose 5-phosphate (non-oxidative stage): step 2/3. In terms of biological role, transaldolase is important for the balance of metabolites in the pentose-phosphate pathway. The polypeptide is Probable transaldolase (Leptospira biflexa serovar Patoc (strain Patoc 1 / Ames)).